The chain runs to 523 residues: UDP-glucuronosyltransferase 2B16 (523 aa).

A signal peptide spans 1 to 16; sequence LLLLLQLSCCFSSGSC. Lys129 is modified (N6-succinyllysine). Asn309 carries N-linked (GlcNAc...) asparagine glycosylation. A helical membrane pass occupies residues 487 to 503; the sequence is VIGFLLACLTITTYLVI.

This sequence belongs to the UDP-glycosyltransferase family.

The protein localises to the microsome membrane. It localises to the endoplasmic reticulum membrane. It catalyses the reaction glucuronate acceptor + UDP-alpha-D-glucuronate = acceptor beta-D-glucuronoside + UDP + H(+). In terms of biological role, UDPGT is of major importance in the conjugation and subsequent elimination of potentially toxic xenobiotics and endogenous compounds. Acts on small phenolic agents such as 2-beta-naphthol and 4-methylumbelliferone as well as bulky phenolic compounds like 2-hydroxy- and 4-hydroxybiphenyl. In contrast to 2B13 it is active toward 4-hydroxyesterone. This chain is UDP-glucuronosyltransferase 2B16 (UGT2B16), found in Oryctolagus cuniculus (Rabbit).